The chain runs to 110 residues: Phosphoribosyl-AMP cyclohydrolase (110 aa).

D74 provides a ligand contact to Mg(2+). C75 serves as a coordination point for Zn(2+). Residues D76 and D78 each contribute to the Mg(2+) site. The Zn(2+) site is built by C91 and C98.

It belongs to the PRA-CH family. Homodimer. Mg(2+) serves as cofactor. Zn(2+) is required as a cofactor.

Its subcellular location is the cytoplasm. The enzyme catalyses 1-(5-phospho-beta-D-ribosyl)-5'-AMP + H2O = 1-(5-phospho-beta-D-ribosyl)-5-[(5-phospho-beta-D-ribosylamino)methylideneamino]imidazole-4-carboxamide. The protein operates within amino-acid biosynthesis; L-histidine biosynthesis; L-histidine from 5-phospho-alpha-D-ribose 1-diphosphate: step 3/9. Its function is as follows. Catalyzes the hydrolysis of the adenine ring of phosphoribosyl-AMP. The chain is Phosphoribosyl-AMP cyclohydrolase from Lacticaseibacillus casei (strain BL23) (Lactobacillus casei).